A 798-amino-acid polypeptide reads, in one-letter code: Transferrin receptor protein 2 (798 aa).

The Cytoplasmic portion of the chain corresponds to 1–81 (MEQRWGLLRR…WAAAGRKAAP (81 aa)). Residues 23–26 (YRRV) carry the Endocytosis signal motif. Residues 82 to 102 (YLVLITLLIFTGAFLLGYVAF) traverse the membrane as a helical; Signal-anchor for type II membrane protein segment. Residues 103 to 798 (RGSCQACGDS…GDVWNIDNNF (696 aa)) are Extracellular-facing. N-linked (GlcNAc...) asparagine glycans are attached at residues N235, N334, and N535.

This sequence belongs to the peptidase M28 family. M28B subfamily. Predominantly expressed in liver. Also expressed in kidney, spleen, brain, lung, heart and muscle with very low expression in kidney, muscle and heart.

The protein localises to the cell membrane. Its subcellular location is the cytoplasm. In terms of biological role, mediates cellular uptake of transferrin-bound iron in a non-iron dependent manner. May be involved in iron metabolism, hepatocyte function and erythrocyte differentiation. This Mus musculus (Mouse) protein is Transferrin receptor protein 2 (Tfr2).